We begin with the raw amino-acid sequence, 360 residues long: GTPase Obg (360 aa).

The region spanning 1-156 (MFVDSVEIII…KCVRLELKLI (156 aa)) is the Obg domain. An OBG-type G domain is found at 157 to 360 (ADIGLVGFPN…LKFVLLEALP (204 aa)). Residues 163-170 (GFPNAGKS), 188-192 (FTTLV), 210-213 (DIPG), 279-282 (NKCD), and 341-343 (SAV) contribute to the GTP site. The Mg(2+) site is built by serine 170 and threonine 190.

Belongs to the TRAFAC class OBG-HflX-like GTPase superfamily. OBG GTPase family. As to quaternary structure, monomer. Requires Mg(2+) as cofactor.

It localises to the cytoplasm. Its function is as follows. An essential GTPase which binds GTP, GDP and possibly (p)ppGpp with moderate affinity, with high nucleotide exchange rates and a fairly low GTP hydrolysis rate. Plays a role in control of the cell cycle, stress response, ribosome biogenesis and in those bacteria that undergo differentiation, in morphogenesis control. In Helicobacter acinonychis (strain Sheeba), this protein is GTPase Obg.